We begin with the raw amino-acid sequence, 329 residues long: Sideroflexin-1.1 (329 aa).

The next 5 membrane-spanning stretches (helical) occupy residues 100–122, 150–167, 178–198, 232–254, and 274–294; these read MPGN…GVVF, LFVS…VALG, LAAR…NIPM, VTLS…MNRI, and IQTL…CALF.

It belongs to the sideroflexin family.

It is found in the mitochondrion inner membrane. It catalyses the reaction L-serine(in) = L-serine(out). The enzyme catalyses L-alanine(in) = L-alanine(out). It carries out the reaction L-cysteine(in) = L-cysteine(out). In terms of biological role, amino acid transporter importing serine, an essential substrate of the mitochondrial branch of the one-carbon pathway, into mitochondria. Mitochondrial serine is then converted to glycine and formate, which exits to the cytosol where it is used to generate the charged folates that serve as one-carbon donors. May also transport other amino acids including alanine and cysteine. This chain is Sideroflexin-1.1, found in Caenorhabditis elegans.